The chain runs to 338 residues: Activator of 90 kDa heat shock protein ATPase homolog 1 (338 aa).

Position 3 is an N6-acetyllysine (Lys-3). Residue Lys-182 forms a Glycyl lysine isopeptide (Lys-Gly) (interchain with G-Cter in SUMO1) linkage. Position 193 is a phosphoserine (Ser-193). A Glycyl lysine isopeptide (Lys-Gly) (interchain with G-Cter in SUMO2) cross-link involves residue Lys-203. Lys-212 bears the N6-acetyllysine mark. Tyr-223 is subject to Phosphotyrosine; by ABL.

This sequence belongs to the AHA1 family. As to quaternary structure, interacts with HSPCA/HSP90. Interacts with HSP90AA1; the interaction activates HSP90AA1 ATPase activity. Interacts with HSP90AB1. Interacts with GCH1. Interacts with SRPK1. Interacts with FLCN. Phosphorylation at Tyr-223 enhances binding to chaperone HSP90AA1.

It localises to the cytoplasm. It is found in the cytosol. Its subcellular location is the endoplasmic reticulum. Its function is as follows. Acts as a co-chaperone of HSP90AA1. Activates the ATPase activity of HSP90AA1 leading to increase in its chaperone activity. Competes with the inhibitory co-chaperone FNIP1 for binding to HSP90AA1, thereby providing a reciprocal regulatory mechanism for chaperoning of client proteins. Competes with the inhibitory co-chaperone TSC1 for binding to HSP90AA1, thereby providing a reciprocal regulatory mechanism for chaperoning of client proteins. This Mus musculus (Mouse) protein is Activator of 90 kDa heat shock protein ATPase homolog 1 (Ahsa1).